Consider the following 515-residue polypeptide: Protein disulfide-isomerase (515 aa).

The N-terminal stretch at 1–25 (MAISKVWISLLLALAVVLSAPAARA) is a signal peptide. The Thioredoxin 1 domain maps to 26 to 150 (EEAAAAEEAA…IVEYLKKQVG (125 aa)). Catalysis depends on nucleophile residues C68 and C71. A disulfide bond links C68 and C71. An N-linked (GlcNAc...) asparagine glycan is attached at N283. Positions 346–489 (LKEQVEAGQI…IVDYIKKNKE (144 aa)) constitute a Thioredoxin 2 domain. Active-site nucleophile residues include C412 and C415. A disulfide bond links C412 and C415. Residues 494–509 (AAAAATEKAAEPAATE) show a composition bias toward low complexity. The disordered stretch occupies residues 494-515 (AAAAATEKAAEPAATEPLKDEL). The short motif at 512 to 515 (KDEL) is the Prevents secretion from ER element.

It belongs to the protein disulfide isomerase family.

The protein localises to the endoplasmic reticulum lumen. The catalysed reaction is Catalyzes the rearrangement of -S-S- bonds in proteins.. Functionally, participates in the folding of proteins containing disulfide bonds, may be involved in glycosylation, prolyl hydroxylation and triglyceride transfer. The protein is Protein disulfide-isomerase (PDI) of Triticum aestivum (Wheat).